The following is a 476-amino-acid chain: Cysteine--tRNA ligase (476 aa).

Cys29 serves as a coordination point for Zn(2+). Residues 31 to 41 (PTVYDYPHLGH) carry the 'HIGH' region motif. Zn(2+) is bound by residues Cys209, His234, and Glu238. The short motif at 266–270 (KMSKS) is the 'KMSKS' region element. An ATP-binding site is contributed by Lys269.

Belongs to the class-I aminoacyl-tRNA synthetase family. Requires Zn(2+) as cofactor.

The protein localises to the cytoplasm. The enzyme catalyses tRNA(Cys) + L-cysteine + ATP = L-cysteinyl-tRNA(Cys) + AMP + diphosphate. The polypeptide is Cysteine--tRNA ligase (cysS) (Pyrococcus horikoshii (strain ATCC 700860 / DSM 12428 / JCM 9974 / NBRC 100139 / OT-3)).